The following is a 423-amino-acid chain: uncharacterized protein (423 aa).

This is an uncharacterized protein from Rhizobium meliloti (strain 1021) (Ensifer meliloti).